Here is a 435-residue protein sequence, read N- to C-terminus: Protein translocase subunit SecY (435 aa).

Helical transmembrane passes span 19 to 39 (ILFT…TVPG), 68 to 88 (FSVF…VQLL), 116 to 136 (YIAL…FDTL), 147 to 167 (VQTY…VTWL), 179 to 199 (GVSM…IKGI), 216 to 236 (FIFV…TTFV), 269 to 289 (VIPV…FQVV), 311 to 331 (ISGM…YTFV), 372 to 392 (VGSL…DVFG), and 395 to 415 (DAVA…IEGM).

Belongs to the SecY/SEC61-alpha family. In terms of assembly, component of the Sec protein translocase complex. Heterotrimer consisting of SecY, SecE and SecG subunits. The heterotrimers can form oligomers, although 1 heterotrimer is thought to be able to translocate proteins. Interacts with the ribosome. Interacts with SecDF, and other proteins may be involved. Interacts with SecA.

The protein resides in the cell membrane. The central subunit of the protein translocation channel SecYEG. Consists of two halves formed by TMs 1-5 and 6-10. These two domains form a lateral gate at the front which open onto the bilayer between TMs 2 and 7, and are clamped together by SecE at the back. The channel is closed by both a pore ring composed of hydrophobic SecY resides and a short helix (helix 2A) on the extracellular side of the membrane which forms a plug. The plug probably moves laterally to allow the channel to open. The ring and the pore may move independently. The protein is Protein translocase subunit SecY of Streptococcus sanguinis (strain SK36).